Reading from the N-terminus, the 409-residue chain is Na(+)-translocating NADH-quinone reductase subunit F (409 aa).

The chain crosses the membrane as a helical span at residues 5–25 (FIFGIGAFTAIVLVLAVVILI). Positions 34 to 128 (GDITISINDD…SMDVELPEEV (95 aa)) constitute a 2Fe-2S ferredoxin-type domain. [2Fe-2S] cluster contacts are provided by C71, C77, C80, and C112. Residues 131 to 271 (VKKWECTVIS…SGPFGEFFAK (141 aa)) enclose the FAD-binding FR-type domain.

This sequence belongs to the NqrF family. In terms of assembly, composed of six subunits; NqrA, NqrB, NqrC, NqrD, NqrE and NqrF. [2Fe-2S] cluster is required as a cofactor. It depends on FAD as a cofactor.

It is found in the cell inner membrane. It carries out the reaction a ubiquinone + n Na(+)(in) + NADH + H(+) = a ubiquinol + n Na(+)(out) + NAD(+). Its function is as follows. NQR complex catalyzes the reduction of ubiquinone-1 to ubiquinol by two successive reactions, coupled with the transport of Na(+) ions from the cytoplasm to the periplasm. The first step is catalyzed by NqrF, which accepts electrons from NADH and reduces ubiquinone-1 to ubisemiquinone by a one-electron transfer pathway. The chain is Na(+)-translocating NADH-quinone reductase subunit F from Actinobacillus succinogenes (strain ATCC 55618 / DSM 22257 / CCUG 43843 / 130Z).